A 462-amino-acid polypeptide reads, in one-letter code: Tissue alpha-L-fucosidase (462 aa).

Residues 1–28 (MWDLKSEWWAVGFGLLLLLAASAQAGGL) form the signal peptide. N-linked (GlcNAc...) asparagine glycans are attached at residues Asn-237, Asn-264, and Asn-378.

It belongs to the glycosyl hydrolase 29 family. In terms of assembly, homotetramer.

The protein resides in the lysosome. It carries out the reaction an alpha-L-fucoside + H2O = L-fucose + an alcohol. The catalysed reaction is a neolactoside IV(2)-alpha-Fuc-nLc4Cer(d18:1(4E)) + H2O = a neolactoside nLc4Cer(d18:1(4E)) + L-fucose. The enzyme catalyses a neolactoside IV(2)-alpha-Fuc-nLc4Cer(d18:0) + H2O = a neolactoside nLc4Cer(d18:0) + L-fucose. In terms of biological role, alpha-L-fucosidase is responsible for hydrolyzing the alpha-1,6-linked fucose joined to the reducing-end N-acetylglucosamine of the carbohydrate moieties of glycoproteins. This is Tissue alpha-L-fucosidase (Fuca1) from Rattus norvegicus (Rat).